We begin with the raw amino-acid sequence, 431 residues long: Serine--tRNA ligase (431 aa).

Thr237–Glu239 contacts L-serine. Arg268 to Glu270 lines the ATP pocket. Glu291 provides a ligand contact to L-serine. Glu355–Ser358 serves as a coordination point for ATP. Ser390 provides a ligand contact to L-serine.

Belongs to the class-II aminoacyl-tRNA synthetase family. Type-1 seryl-tRNA synthetase subfamily. In terms of assembly, homodimer. The tRNA molecule binds across the dimer.

The protein resides in the cytoplasm. The catalysed reaction is tRNA(Ser) + L-serine + ATP = L-seryl-tRNA(Ser) + AMP + diphosphate + H(+). It catalyses the reaction tRNA(Sec) + L-serine + ATP = L-seryl-tRNA(Sec) + AMP + diphosphate + H(+). The protein operates within aminoacyl-tRNA biosynthesis; selenocysteinyl-tRNA(Sec) biosynthesis; L-seryl-tRNA(Sec) from L-serine and tRNA(Sec): step 1/1. Functionally, catalyzes the attachment of serine to tRNA(Ser). Is also able to aminoacylate tRNA(Sec) with serine, to form the misacylated tRNA L-seryl-tRNA(Sec), which will be further converted into selenocysteinyl-tRNA(Sec). This is Serine--tRNA ligase from Neisseria gonorrhoeae (strain ATCC 700825 / FA 1090).